We begin with the raw amino-acid sequence, 280 residues long: SPX domain-containing protein 2 (280 aa).

Residues 1–162 (MKFGKSLSSQ…GSMIRLPFVQ (162 aa)) form the SPX domain. Disordered stretches follow at residues 191–244 (PTNE…KSTV) and 257–280 (GSSTVSVFSLPPLHGSNGQDEPGR).

As to quaternary structure, interacts (via SPX domain) with PHR2 (via C-terminus). Interacts with RLI1 in the nucleus to prevents its positive regulation of leaf inclination during phosphate (Pi) starvation. In terms of tissue distribution, predominantly expressed in roots, leaves and seeds. Localized in leaves lamina joints.

The protein resides in the nucleus. Inhibits PHR2 DNA-binding activity via a phosphate (Pi)-dependent protein interaction. Together with SPX1, plays a negative role in the regulation of leaf inclination by preventing RLI1 transcription factor activity in Pi depleted conditions. The polypeptide is SPX domain-containing protein 2 (Oryza sativa subsp. japonica (Rice)).